A 188-amino-acid polypeptide reads, in one-letter code: UPF0398 protein OEOE_1093 (188 aa).

This sequence belongs to the UPF0398 family.

In Oenococcus oeni (strain ATCC BAA-331 / PSU-1), this protein is UPF0398 protein OEOE_1093.